Reading from the N-terminus, the 203-residue chain is Large ribosomal subunit protein bL25 (203 aa).

Belongs to the bacterial ribosomal protein bL25 family. CTC subfamily. In terms of assembly, part of the 50S ribosomal subunit; part of the 5S rRNA/L5/L18/L25 subcomplex. Contacts the 5S rRNA. Binds to the 5S rRNA independently of L5 and L18.

This is one of the proteins that binds to the 5S RNA in the ribosome where it forms part of the central protuberance. In Rickettsia africae (strain ESF-5), this protein is Large ribosomal subunit protein bL25.